Reading from the N-terminus, the 609-residue chain is UvrABC system protein C (609 aa).

In terms of domain architecture, GIY-YIG spans 16–94 (SSPGVYRMYD…IKQYMPKYNV (79 aa)). Residues 203–238 (QQVTKALVAKMEQAAVELNYEQAARYRDQITALRRV) enclose the UVR domain.

It belongs to the UvrC family. In terms of assembly, interacts with UvrB in an incision complex.

It is found in the cytoplasm. In terms of biological role, the UvrABC repair system catalyzes the recognition and processing of DNA lesions. UvrC both incises the 5' and 3' sides of the lesion. The N-terminal half is responsible for the 3' incision and the C-terminal half is responsible for the 5' incision. The polypeptide is UvrABC system protein C (Shewanella piezotolerans (strain WP3 / JCM 13877)).